A 1259-amino-acid polypeptide reads, in one-letter code: Lysine-specific demethylase 2B (1259 aa).

Positions 147 to 315 constitute a JmjC domain; it reads FSHTKLERVV…MQLRVFEIED (169 aa). Thr-208 contacts substrate. Fe cation is bound by residues His-211 and Asp-213. Lys-228 provides a ligand contact to substrate. Position 283 (His-283) interacts with Fe cation. Positions 388–402 are enriched in basic and acidic residues; sequence EEKGNLVEKPSKQSG. Disordered stretches follow at residues 388–463 and 536–562; these read EEKG…ATDM and KPSK…SANR. Positions 403–413 are enriched in polar residues; the sequence is DESSTTNSTHS. Basic and acidic residues predominate over residues 414-423; sequence NGKDAAEKKQ. A compositionally biased stretch (polar residues) spans 426-437; it reads TLMQQLKRTLSN. Positions 536–548 are enriched in basic residues; sequence KPSKNRAVGRPKG. A CXXC-type zinc finger spans residues 567-613; sequence ARRRRTRCRKCEACLRTECGECHFCKDMKKFGGPGRMKQSCIMRQCI. Residues Cys-574, Cys-577, Cys-580, Cys-585, Cys-588, Cys-591, Cys-607, Cys-612, Cys-623, Cys-626, Cys-649, Cys-652, His-657, Cys-660, Cys-680, and Cys-683 each contribute to the Zn(2+) site. Residues 620 to 686 form a PHD-type zinc finger; sequence TAVCLVCGEA…CWECPKCNHA (67 aa). 2 stretches are compositionally biased toward basic and acidic residues: residues 729 to 763 and 771 to 790; these read KKKV…EDGH and EKPP…EEKL. Residues 729–958 are disordered; that stretch reads KKKVEREETP…PPPSLSPPKC (230 aa). Polar residues predominate over residues 835 to 848; the sequence is SRSSSPTAGPSTEG. The segment covering 854-863 has biased composition (basic residues); that stretch reads KKKIRRKRRV. A compositionally biased stretch (basic and acidic residues) spans 864 to 877; it reads SNKELSKELSKELN. Residues 864–891 adopt a coiled-coil conformation; that stretch reads SNKELSKELSKELNQEIQKTESSLASEN. Positions 878-889 are enriched in polar residues; that stretch reads QEIQKTESSLAS. Over residues 890–908 the composition is skewed to basic and acidic residues; it reads ENHHPIKSEPESDNEESKK. Residues 985–1030 enclose the F-box domain; the sequence is AHVMQREVWMAIFSYLSHRDLCICMRICRTWNRWCCDKRLWTQIDL. LRR repeat units follow at residues 1056–1081, 1082–1105, 1145–1170, 1171–1200, and 1201–1225; these read WTNI…NLSG, CSWI…NVQW, GLDI…DLSY, CNHV…NLSD, and CNNV…DLRF.

This sequence belongs to the JHDM1 histone demethylase family. Requires Fe(2+) as cofactor.

The protein localises to the nucleus. Its subcellular location is the nucleolus. It is found in the chromosome. It catalyses the reaction N(6),N(6)-dimethyl-L-lysyl(36)-[histone H3] + 2 2-oxoglutarate + 2 O2 = L-lysyl(36)-[histone H3] + 2 formaldehyde + 2 succinate + 2 CO2. Its activity is regulated as follows. Histone demethylase activity is inhibited by fumarate. Functionally, histone demethylase that demethylates 'Lys-4' and 'Lys-36' of histone H3, thereby playing a central role in histone code. Preferentially demethylates trimethylated H3 'Lys-4' and dimethylated H3 'Lys-36' residue while it has weak or no activity for mono- and tri-methylated H3 'Lys-36'. Preferentially binds the transcribed region of ribosomal RNA and represses the transcription of ribosomal RNA genes which inhibits cell growth and proliferation. In Xenopus laevis (African clawed frog), this protein is Lysine-specific demethylase 2B (kdm2b).